A 518-amino-acid chain; its full sequence is Xylose import ATP-binding protein XylG (518 aa).

ABC transporter domains are found at residues 6 to 245 (LQMN…VGRE) and 262 to 507 (FEAR…LSHS). 38-45 (GENGAGKS) contacts ATP.

It belongs to the ABC transporter superfamily. Xylose importer (TC 3.A.1.2.4) family. The complex is composed of two ATP-binding proteins (XylG), two transmembrane proteins (XylH) and a solute-binding protein (XylF).

It localises to the cell inner membrane. The catalysed reaction is D-xylose(out) + ATP + H2O = D-xylose(in) + ADP + phosphate + H(+). Functionally, part of the ABC transporter complex XylFGH involved in xylose import. Responsible for energy coupling to the transport system. This Pseudomonas syringae pv. syringae (strain B728a) protein is Xylose import ATP-binding protein XylG.